The sequence spans 877 residues: Alanine--tRNA ligase (877 aa).

Zn(2+) is bound by residues His563, His567, Cys667, and His671.

It belongs to the class-II aminoacyl-tRNA synthetase family. Zn(2+) serves as cofactor.

It localises to the cytoplasm. It catalyses the reaction tRNA(Ala) + L-alanine + ATP = L-alanyl-tRNA(Ala) + AMP + diphosphate. Functionally, catalyzes the attachment of alanine to tRNA(Ala) in a two-step reaction: alanine is first activated by ATP to form Ala-AMP and then transferred to the acceptor end of tRNA(Ala). Also edits incorrectly charged Ser-tRNA(Ala) and Gly-tRNA(Ala) via its editing domain. In Cytophaga hutchinsonii (strain ATCC 33406 / DSM 1761 / CIP 103989 / NBRC 15051 / NCIMB 9469 / D465), this protein is Alanine--tRNA ligase.